Consider the following 484-residue polypeptide: MIKERVIIVGSGISGCTAALRLMQDYDVTIITKGYKEESNSMLAQGGVAAAVSKNDTPKKHFSDTFQAGCFHNKVLAVNQLVTHGPMVIQKLIAEGMAFDEQDGELALGLEGAHQLPRILHTGGDQTGKFLTTFLQEKLTDIHWQEQKMAIEIIKQNDSAIGVHCLDKENRLHTYYGEHIILASGGLGQLFPVTTNAATISGDGLALAYRAGAKLTDMEFIQFHPTLLFLNGRCHGLISEAVRGEGAKLIRADGSAIMTDVHPRADLAPRDIVAATLFAEIQDGNEVFLDITAIPNFEKRFPGITANLDAHHIPFRETKRIPVHPGAHFLMGGIRTDLSGKTNIPGLYAIGEVANAGVHGANRLASNSLLETLVFGEKVAEYIRTQKINPIDHPEIPLSNQIQTPHLPDKQLLQEKIWETLGITRKPEKITEFLHWLTDFDYANHTRKTAEISHMLITAKLIAESALKRTESLGAHRILKGVIK.

FAD is bound by residues 11–14 (SGIS), lysine 33, 40–47 (NSMLAQGG), and aspartate 203. The Proton donor/acceptor role is filled by arginine 270. FAD is bound by residues glutamate 352 and 368-369 (SL).

It belongs to the FAD-dependent oxidoreductase 2 family. NadB subfamily. FAD serves as cofactor.

It localises to the cytoplasm. The catalysed reaction is L-aspartate + O2 = iminosuccinate + H2O2. It participates in cofactor biosynthesis; NAD(+) biosynthesis; iminoaspartate from L-aspartate (oxidase route): step 1/1. Functionally, catalyzes the oxidation of L-aspartate to iminoaspartate, the first step in the de novo biosynthesis of NAD(+). The sequence is that of L-aspartate oxidase (nadB) from Listeria monocytogenes serovar 1/2a (strain ATCC BAA-679 / EGD-e).